We begin with the raw amino-acid sequence, 528 residues long: Negative elongation factor A (528 aa).

Positions 89 to 248 (WVLMVADILK…TPIPPSRTLL (160 aa)) constitute an HDAg domain. Residues 125–188 (REKVGECEAS…LQKSTETAQQ (64 aa)) form an NELF-C/D-binding region. Residue threonine 157 is modified to Phosphothreonine. Residues 189–248 (LKRSAGVPFHAKGRGLLRKMDTTTPLKGIPKQAPFRSPTAPSVFSPTGNRTPIPPSRTLL) are RNAPII-binding. The segment at 215-245 (KGIPKQAPFRSPTAPSVFSPTGNRTPIPPSR) is disordered. Phosphoserine occurs at positions 225 and 233. Residues 227–238 (TAPSVFSPTGNR) show a composition bias toward polar residues. Threonine 277 carries the phosphothreonine modification. Residues 320-341 (PSTSYLPSTPSVVPASSYIPSS) are compositionally biased toward low complexity. Positions 320–409 (PSTSYLPSTP…PPAVAPTTQT (90 aa)) are disordered. Serine 363 is modified (phosphoserine).

This sequence belongs to the NELF-A family. In terms of assembly, the NELF complex is composed of NELFA, NELFB, NELFCD (isoform NELF-C or isoform NELF-D) and NELFE; NELFA and NELFCD form a stable subcomplex that binds to the N-terminus of NELFB. In vitro, the NELFA:NELFCD subcomplex binds to ssDNA and ssRNA in a sequence- and structure-dependent manner. Interacts with the RNA polymerase II complex when it is not phosphorylated by P-TEFb. As to expression, ubiquitous. Expressed in heart, brain, placenta, liver, skeletal muscle, kidney and pancreas. Expressed at lower level in adult lung. Expressed in fetal brain, lung, liver and kidney.

The protein localises to the nucleus. In terms of biological role, essential component of the NELF complex, a complex that negatively regulates the elongation of transcription by RNA polymerase II. The NELF complex, which acts via an association with the DSIF complex and causes transcriptional pausing, is counteracted by the P-TEFb kinase complex. Functionally, (Microbial infection) The NELF complex is involved in HIV-1 latency possibly involving recruitment of PCF11 to paused RNA polymerase II. This is Negative elongation factor A (NELFA) from Homo sapiens (Human).